Here is a 446-residue protein sequence, read N- to C-terminus: tRNA modification GTPase MnmE (446 aa).

Residues R23, E81, and K120 each coordinate (6S)-5-formyl-5,6,7,8-tetrahydrofolate. The TrmE-type G domain occupies 216–370; the sequence is GFKVAIIGKP…LIKELELILD (155 aa). A K(+)-binding site is contributed by N226. Residues 226–231, 245–251, and 270–273 contribute to the GTP site; these read NVGKSS, SDIAGTT, and DTAG. S230 contacts Mg(2+). Residues S245, I247, and T250 each contribute to the K(+) site. T251 is a binding site for Mg(2+). K446 contacts (6S)-5-formyl-5,6,7,8-tetrahydrofolate.

The protein belongs to the TRAFAC class TrmE-Era-EngA-EngB-Septin-like GTPase superfamily. TrmE GTPase family. In terms of assembly, homodimer. Heterotetramer of two MnmE and two MnmG subunits. K(+) serves as cofactor.

Its subcellular location is the cytoplasm. Functionally, exhibits a very high intrinsic GTPase hydrolysis rate. Involved in the addition of a carboxymethylaminomethyl (cmnm) group at the wobble position (U34) of certain tRNAs, forming tRNA-cmnm(5)s(2)U34. This Aliarcobacter butzleri (strain RM4018) (Arcobacter butzleri) protein is tRNA modification GTPase MnmE.